The chain runs to 263 residues: MSVEGLLSEVKHFNAHHLDAALGEQLFYGGKRVFSDVKPGTSSGGDHGCKGGKSELKGAIHNAKHAADKALNKEGGEDVSKLREEHSALAKKVDDLASLVAELQLQLSTLRQGQTSSVAAPAAAPAAAKEEAAGDDDFDLFGSEDEEEDEEKKKVVEERLAAYAAKKATKAGPIAKSSVILDVKPWDDETDLGEMEKLVRSIEMDGLVWGGAKLIPIGYGIKKLQIITVIEDLKVSVDDLIEKITGDFEDHVQSVDIVAFNKI.

Position 2 is an N-acetylserine (Ser-2). Residues 112 to 153 form a disordered region; sequence QGQTSSVAAPAAAPAAAKEEAAGDDDFDLFGSEDEEEDEEKK. Residues 133-150 show a composition bias toward acidic residues; the sequence is AGDDDFDLFGSEDEEEDE.

This sequence belongs to the EF-1-beta/EF-1-delta family. EF-1 is composed of 4 subunits: alpha, beta, delta, and gamma.

In terms of biological role, EF-1-beta and EF-1-delta stimulate the exchange of GDP bound to EF-1-alpha to GTP. This chain is Probable elongation factor 1-beta/1-delta 2, found in Caenorhabditis elegans.